The chain runs to 248 residues: tRNA uridine(34) hydroxylase (248 aa).

One can recognise a Rhodanese domain in the interval 127–221 (RGRPLVLLDT…YFEEVGGEGY (95 aa)). Cys-181 functions as the Cysteine persulfide intermediate in the catalytic mechanism.

The protein belongs to the TrhO family.

The catalysed reaction is uridine(34) in tRNA + AH2 + O2 = 5-hydroxyuridine(34) in tRNA + A + H2O. Catalyzes oxygen-dependent 5-hydroxyuridine (ho5U) modification at position 34 in tRNAs. The sequence is that of tRNA uridine(34) hydroxylase from Xanthomonas euvesicatoria pv. vesicatoria (strain 85-10) (Xanthomonas campestris pv. vesicatoria).